The following is a 503-amino-acid chain: MTDLPAELERVHMVGIGGAGMSGIARILLARGGQVSGSDAKESRGVLALRARGAQVRIGHDAGALDLLPGGPTVVVTTHAAIPKDNPELVEAARRGIPVILRPAVLASLMQGHRTLLVSGTHGKTSTTSMLVVALQHCGFDPSFAVGGELNEAGTNAHHGSGDVFVAEADESDGSLLQYEPDVVVVTNVEADHLDYFGSTEAYIQVFDDFAARLSPGGLLVACLDDPGSAALAQRVAARGLPGVRVLGYGSAEDADGAFASVDGVEVGARLLSFEARDVGGVLQFQLAGEQSPRTVRMGVPGRHMALNALAALLAAREAGADVDEILEGIAGFGGVHRRFQFTGREHGVRVFDDYAHHPTEVRAVLGAAADLVRQPHEADRRESEDSVRSGKVIVVFQPHLYSRTATFAEEFGHALDLADEVVVLDVYGAREEPLPGVSGALVALSVSKPVHYQPDLSQAPRQVAALASPGDVVITMGAGDVTMLGNQILDALRAAPHHHPSR.

ATP is bound at residue 120-126 (GTHGKTS).

Belongs to the MurCDEF family.

Its subcellular location is the cytoplasm. The enzyme catalyses UDP-N-acetyl-alpha-D-muramate + L-alanine + ATP = UDP-N-acetyl-alpha-D-muramoyl-L-alanine + ADP + phosphate + H(+). It functions in the pathway cell wall biogenesis; peptidoglycan biosynthesis. Cell wall formation. This chain is UDP-N-acetylmuramate--L-alanine ligase, found in Rhodococcus jostii (strain RHA1).